Consider the following 369-residue polypeptide: Serpentine receptor class epsilon-45 (369 aa).

The next 8 helical transmembrane spans lie at 1–21 (MIFL…IFIL), 39–59 (FVLT…AIHI), 67–87 (TVLL…NILI), 127–147 (FFLG…TLLV), 169–191 (GLFF…LFFF), 195–217 (HFAV…FTYV), 258–278 (VIHA…FMYL), and 291–311 (IFES…LGSV).

Belongs to the nematode receptor-like protein sre family.

It localises to the membrane. In Caenorhabditis elegans, this protein is Serpentine receptor class epsilon-45 (sre-45).